The chain runs to 166 residues: Large ribosomal subunit protein uL10 (166 aa).

It belongs to the universal ribosomal protein uL10 family. Part of the ribosomal stalk of the 50S ribosomal subunit. The N-terminus interacts with L11 and the large rRNA to form the base of the stalk. The C-terminus forms an elongated spine to which L12 dimers bind in a sequential fashion forming a multimeric L10(L12)X complex.

Its function is as follows. Forms part of the ribosomal stalk, playing a central role in the interaction of the ribosome with GTP-bound translation factors. This chain is Large ribosomal subunit protein uL10, found in Bacillus velezensis (strain DSM 23117 / BGSC 10A6 / LMG 26770 / FZB42) (Bacillus amyloliquefaciens subsp. plantarum).